A 229-amino-acid polypeptide reads, in one-letter code: Small ribosomal subunit protein uS5 (229 aa).

The S5 DRBM domain occupies 61–124 (LEEQVLDVKL…AHAKLSLIKV (64 aa)).

Belongs to the universal ribosomal protein uS5 family. Part of the 30S ribosomal subunit. Contacts protein S4.

Functionally, with S4 and S12 plays an important role in translational accuracy. The sequence is that of Small ribosomal subunit protein uS5 from Methanococcus maripaludis (strain C7 / ATCC BAA-1331).